The sequence spans 2273 residues: Acetyl-CoA carboxylase, mitochondrial (2273 aa).

Residues 1–104 (KGKTITHGQS…RGNIHKHTRL (104 aa)) constitute a mitochondrion transit peptide. One can recognise a Biotin carboxylation domain in the interval 134–635 (VISKILIANN…STGWLDDLIL (502 aa)). An ATP-grasp domain is found at 292 to 484 (KTNFVSVPDD…LPATQLQIAM (193 aa)). 332-337 (GGGGKG) is an ATP binding site. The active site involves R459. The Biotinyl-binding domain occupies 763–837 (LEAELNPTQV…EAGDVIAKLT (75 aa)). K804 carries the post-translational modification N6-biotinyllysine. A CoA carboxyltransferase N-terminal domain is found at 1532–1867 (PYSVKDWLQP…KRDMSPPLLE (336 aa)). Residues 1532-2187 (PYSVKDWLQP…EGQVIKRLQK (656 aa)) are carboxyltransferase. 3 residues coordinate CoA: R1776, K2080, and R2082. In terms of domain architecture, CoA carboxyltransferase C-terminal spans 1871–2187 (RWDRDVDFKP…EGQVIKRLQK (317 aa)).

Biotin serves as cofactor.

It localises to the mitochondrion. The catalysed reaction is hydrogencarbonate + acetyl-CoA + ATP = malonyl-CoA + ADP + phosphate + H(+). The enzyme catalyses N(6)-biotinyl-L-lysyl-[protein] + hydrogencarbonate + ATP = N(6)-carboxybiotinyl-L-lysyl-[protein] + ADP + phosphate + H(+). The protein operates within lipid metabolism; malonyl-CoA biosynthesis; malonyl-CoA from acetyl-CoA: step 1/1. In terms of biological role, catalyzes the rate-limiting reaction in the mitochondrial fatty acid synthesis (FAS) type II pathway. Responsible for the production of the mitochondrial malonyl-CoA, used for the biosynthesis of the cofactor lipoic acid. This protein carries three functions: biotin carboxyl carrier protein, biotin carboxylase, and carboxyltransferase. This Saccharomyces cerevisiae (strain YJM789) (Baker's yeast) protein is Acetyl-CoA carboxylase, mitochondrial (HFA1).